Here is a 283-residue protein sequence, read N- to C-terminus: Nucleotide-binding protein Hore_15880 (283 aa).

Gly8 to Ser15 is a binding site for ATP. Residue Asp57–Gly60 participates in GTP binding.

This sequence belongs to the RapZ-like family.

In terms of biological role, displays ATPase and GTPase activities. This Halothermothrix orenii (strain H 168 / OCM 544 / DSM 9562) protein is Nucleotide-binding protein Hore_15880.